Here is a 160-residue protein sequence, read N- to C-terminus: Phosphopantetheine adenylyltransferase (160 aa).

S9 serves as a coordination point for substrate. ATP is bound by residues 9-10 (SF) and H17. Substrate contacts are provided by K41, T73, and R87. Residues 88–90 (GMR), E98, and 123–129 (YTFFSSS) contribute to the ATP site.

This sequence belongs to the bacterial CoaD family. Homohexamer. Mg(2+) is required as a cofactor.

It is found in the cytoplasm. It catalyses the reaction (R)-4'-phosphopantetheine + ATP + H(+) = 3'-dephospho-CoA + diphosphate. It participates in cofactor biosynthesis; coenzyme A biosynthesis; CoA from (R)-pantothenate: step 4/5. Reversibly transfers an adenylyl group from ATP to 4'-phosphopantetheine, yielding dephospho-CoA (dPCoA) and pyrophosphate. This is Phosphopantetheine adenylyltransferase from Roseiflexus sp. (strain RS-1).